Here is a 504-residue protein sequence, read N- to C-terminus: 6,7,8-trihydroxycoumarin synthase (504 aa).

Residues 1–21 traverse the membrane as a helical segment; that stretch reads MEPVFLFLILAFPIASVYLLF. Positions 363-368 are substrate specificity; that stretch reads PAPVLV. Cys-444 contacts heme.

The protein belongs to the cytochrome P450 family. Heme serves as cofactor.

It is found in the microsome membrane. It participates in secondary metabolite biosynthesis. In terms of biological role, involved in the biosynthesis of coumarins and furanocoumarins (FCs), natural products required for defense responses against attacks by predators with potential medical and agroindustrial usages such as anticoagulant, rodenticide and artificial vanilla substitutes. Able to catalyze the hydroxylation of esculetin to produce 6,7,8-trihydroxycoumarin. This is 6,7,8-trihydroxycoumarin synthase from Pastinaca sativa (Wild parsnip).